A 353-amino-acid chain; its full sequence is Guanine nucleotide-binding protein subunit alpha (353 aa).

Residue glycine 2 is the site of N-myristoyl glycine attachment. Cysteine 3 carries S-palmitoyl cysteine lipidation. The region spanning 32 to 353 is the G-alpha domain; sequence NEIKMLLLGA…QENLRLCGLI (322 aa). The tract at residues 35–48 is G1 motif; the sequence is KMLLLGAGESGKST. 14 residues coordinate GTP: glutamate 43, serine 44, glycine 45, lysine 46, serine 47, threonine 48, aspartate 150, leucine 175, threonine 181, glycine 203, asparagine 269, lysine 270, aspartate 272, and alanine 325. Serine 47 provides a ligand contact to Mg(2+). A G2 motif region spans residues 173 to 181; the sequence is DVLRSRVKT. Threonine 181 contributes to the Mg(2+) binding site. The tract at residues 196–205 is G3 motif; that stretch reads YRMFDVGGQR. The interval 265 to 272 is G4 motif; that stretch reads ILFLNKID. Residues 323-328 are G5 motif; the sequence is TCATDT.

The protein belongs to the G-alpha family. G(q) subfamily. As to quaternary structure, g proteins are composed of 3 units; alpha, beta and gamma. The alpha chain contains the guanine nucleotide binding site. Mg(2+) is required as a cofactor.

Guanine nucleotide-binding proteins (G proteins) are involved as modulators or transducers in various transmembrane signaling systems. Involved in the mating pathway. The sequence is that of Guanine nucleotide-binding protein subunit alpha (CGA1) from Cochliobolus heterostrophus (strain C4 / ATCC 48331 / race T) (Southern corn leaf blight fungus).